A 439-amino-acid chain; its full sequence is Tryptophan synthase beta chain 2 (439 aa).

N6-(pyridoxal phosphate)lysine is present on Lys99.

Belongs to the TrpB family. Tetramer of two alpha and two beta chains. Pyridoxal 5'-phosphate serves as cofactor.

It catalyses the reaction (1S,2R)-1-C-(indol-3-yl)glycerol 3-phosphate + L-serine = D-glyceraldehyde 3-phosphate + L-tryptophan + H2O. The protein operates within amino-acid biosynthesis; L-tryptophan biosynthesis; L-tryptophan from chorismate: step 5/5. The beta subunit is responsible for the synthesis of L-tryptophan from indole and L-serine. This Corynebacterium efficiens (strain DSM 44549 / YS-314 / AJ 12310 / JCM 11189 / NBRC 100395) protein is Tryptophan synthase beta chain 2 (trpB2).